A 341-amino-acid chain; its full sequence is 4-hydroxy-2-oxovalerate aldolase 2 (341 aa).

Residues 8–260 (VTVHDMTLRD…ETGVDVAKIT (253 aa)) enclose the Pyruvate carboxyltransferase domain. 16 to 17 (RD) lines the substrate pocket. Residue Asp-17 participates in Mn(2+) binding. Residue His-20 is the Proton acceptor of the active site. Substrate is bound by residues Ser-170 and His-199. Residues His-199 and His-201 each contribute to the Mn(2+) site. Substrate is bound at residue Tyr-290.

Belongs to the 4-hydroxy-2-oxovalerate aldolase family.

The enzyme catalyses (S)-4-hydroxy-2-oxopentanoate = acetaldehyde + pyruvate. The protein is 4-hydroxy-2-oxovalerate aldolase 2 of Dechloromonas aromatica (strain RCB).